A 377-amino-acid polypeptide reads, in one-letter code: Sterol 24-C-methyltransferase erg6 (377 aa).

Belongs to the class I-like SAM-binding methyltransferase superfamily. Erg6/SMT family.

The protein resides in the microsome. The protein localises to the mitochondrion. The enzyme catalyses lanosterol + S-adenosyl-L-methionine = eburicol + S-adenosyl-L-homocysteine + H(+). The protein operates within steroid metabolism; ergosterol biosynthesis. Its activity is regulated as follows. Specific and total activity is decreased in presence of alpha-bisabolol. Functionally, sterol 24-C-methyltransferase; part of the third module of ergosterol biosynthesis pathway that includes the late steps of the pathway. Methylates lanosterol at C-24 to produce eburicol. The third module or late pathway involves the ergosterol synthesis itself through consecutive reactions that mainly occur in the endoplasmic reticulum (ER) membrane. Firstly, the squalene synthase erg9 catalyzes the condensation of 2 farnesyl pyrophosphate moieties to form squalene, which is the precursor of all steroids. Squalene synthase is crucial for balancing the incorporation of farnesyl diphosphate (FPP) into sterol and nonsterol isoprene synthesis. Secondly, squalene is converted into lanosterol by the consecutive action of the squalene epoxidase erg1 and the lanosterol synthase erg7. Then, the delta(24)-sterol C-methyltransferase erg6 methylates lanosterol at C-24 to produce eburicol. Eburicol is the substrate of the sterol 14-alpha demethylase encoded by cyp51A and cyp51B, to yield 4,4,24-trimethyl ergosta-8,14,24(28)-trienol. The C-14 reductase erg24 then reduces the C14=C15 double bond which leads to 4,4-dimethylfecosterol. A sequence of further demethylations at C-4, involving the C-4 demethylation complex containing the C-4 methylsterol oxidases erg25A or erg25B, the sterol-4-alpha-carboxylate 3-dehydrogenase erg26 and the 3-keto-steroid reductase erg27, leads to the production of fecosterol via 4-methylfecosterol. The C-8 sterol isomerase erg2 then catalyzes the reaction which results in unsaturation at C-7 in the B ring of sterols and thus converts fecosterol to episterol. The sterol-C5-desaturase erg3B then catalyzes the introduction of a C-5 double bond in the B ring to produce 5-dehydroepisterol. The 2 other sterol-C5-desaturases, erg3A and erg3C, seem to be less important in ergosterol biosynthesis. The C-22 sterol desaturase erg5 further converts 5-dehydroepisterol into ergosta-5,7,22,24(28)-tetraen-3beta-ol by forming the C-22(23) double bond in the sterol side chain. Finally, ergosta-5,7,22,24(28)-tetraen-3beta-ol is substrate of the C-24(28) sterol reductases erg4A and erg4B to produce ergosterol. Possible alternative sterol biosynthetic pathways might exist from fecosterol to ergosterol, depending on the activities of the erg3 isoforms. This chain is Sterol 24-C-methyltransferase erg6, found in Aspergillus fumigatus (strain ATCC MYA-4609 / CBS 101355 / FGSC A1100 / Af293) (Neosartorya fumigata).